A 311-amino-acid chain; its full sequence is Quinolinate synthase (311 aa).

The iminosuccinate site is built by histidine 25 and serine 42. A [4Fe-4S] cluster-binding site is contributed by cysteine 87. Residues 113 to 115 (YIN) and serine 130 contribute to the iminosuccinate site. Cysteine 175 is a [4Fe-4S] cluster binding site. Residues 201–203 (HPE) and threonine 218 each bind iminosuccinate. [4Fe-4S] cluster is bound at residue cysteine 268.

The protein belongs to the quinolinate synthase family. Type 2 subfamily. [4Fe-4S] cluster is required as a cofactor.

It localises to the cytoplasm. The catalysed reaction is iminosuccinate + dihydroxyacetone phosphate = quinolinate + phosphate + 2 H2O + H(+). It functions in the pathway cofactor biosynthesis; NAD(+) biosynthesis; quinolinate from iminoaspartate: step 1/1. Catalyzes the condensation of iminoaspartate with dihydroxyacetone phosphate to form quinolinate. This is Quinolinate synthase from Saccharolobus solfataricus (strain ATCC 35092 / DSM 1617 / JCM 11322 / P2) (Sulfolobus solfataricus).